Consider the following 387-residue polypeptide: Phosphoglycerate kinase (387 aa).

Substrate-binding positions include 21 to 23 (DLN), Arg-36, 59 to 62 (HLGR), Arg-113, and Arg-146. ATP-binding positions include Lys-197, Glu-314, and 340-343 (GGDT).

The protein belongs to the phosphoglycerate kinase family. In terms of assembly, monomer.

It localises to the cytoplasm. The enzyme catalyses (2R)-3-phosphoglycerate + ATP = (2R)-3-phospho-glyceroyl phosphate + ADP. The protein operates within carbohydrate degradation; glycolysis; pyruvate from D-glyceraldehyde 3-phosphate: step 2/5. The protein is Phosphoglycerate kinase of Photorhabdus luminescens (Xenorhabdus luminescens).